We begin with the raw amino-acid sequence, 251 residues long: MSGPVRTEPLHGETPLLASSGSYSVVVLLRGYAEPQGVGDAVRADGTVTLVLPRGWVSDTSRRLAPSADGGAKTALEEAVRGPILVDTGGPWTRDALLEALATQGVAPGDVTLVVGTHGHSDHIGNLGLFPQAALLVSHDFCLPGGLYLPHGLCETQPLILGSGLQVWATPGHGGQRDVSVVVEGTSLGTVVVVGDVFERLGDEDSWQDLSEDPVAQQRSRERILSVADVVVPGHGAPFRVVREAVKSSED.

Zn(2+) is bound by residues His118, His120, Asp122, His123, His173, Asp196, and His235.

It belongs to the metallo-beta-lactamase superfamily. Glyoxalase II family. Homodimer. Zn(2+) serves as cofactor.

It is found in the cytoplasm. The protein resides in the cytosol. Its subcellular location is the nucleus. The enzyme catalyses a ribonucleotidyl-ribonucleotide-RNA + H2O = a 3'-end ribonucleotide-RNA + a 5'-end 5'-phospho-ribonucleoside-RNA + H(+). Endoribonuclease that catalyzes the hydrolysis of histone-coding pre-mRNA 3'-end. Involved in histone pre-mRNA processing during the S-phase of the cell cycle, which is required for entering/progressing through S-phase. Cleaves histone pre-mRNA at a major and a minor cleavage site after the 5'-ACCCA-3' and the 5'-ACCCACA-3' sequence, respectively, and located downstream of the stem-loop. May require the presence of the HDE element located at the histone pre-RNA 3'-end to avoid non-specific cleavage. The sequence is that of Metallo-beta-lactamase domain-containing protein 1 (Mblac1) from Rattus norvegicus (Rat).